The primary structure comprises 370 residues: Succinoglycan biosynthesis protein ExoH (370 aa).

10 helical membrane-spanning segments follow: residues 14 to 34 (ILLI…WSPF), 46 to 66 (VFLG…ISGY), 88 to 108 (TVLL…YAIQ), 144 to 164 (LYFL…ALLV), 170 to 190 (VTLL…IFLK), 193 to 213 (ILFG…IKML), 216 to 236 (FAAP…VGLY), 244 to 264 (LWLD…SWAI), 282 to 302 (GLSF…WMIW), and 307 to 327 (LSYY…ILVA). The tract at residues 350 to 370 (AKRMATQPPQGAQAGYSPQQR) is disordered.

The protein belongs to the acyltransferase 3 family.

The protein resides in the cell membrane. The protein operates within glycan metabolism; exopolysaccharide biosynthesis. Required for the succinyl modification of the seventh sugar (glucose) of the octasaccharide subunit of succinoglycan (EPS I). This chain is Succinoglycan biosynthesis protein ExoH (exoH), found in Rhizobium meliloti (strain 1021) (Ensifer meliloti).